A 468-amino-acid polypeptide reads, in one-letter code: 6-phospho-beta-galactosidase (468 aa).

D-galactose 6-phosphate-binding residues include glutamine 19, histidine 116, asparagine 159, glutamate 160, and asparagine 297. The Proton donor role is filled by glutamate 160. Catalysis depends on glutamate 375, which acts as the Nucleophile. D-galactose 6-phosphate is bound by residues serine 428, tryptophan 429, lysine 435, and tyrosine 437.

The protein belongs to the glycosyl hydrolase 1 family.

The catalysed reaction is a 6-phospho-beta-D-galactoside + H2O = D-galactose 6-phosphate + an alcohol. It functions in the pathway carbohydrate metabolism; lactose degradation; D-galactose 6-phosphate and beta-D-glucose from lactose 6-phosphate: step 1/1. The protein is 6-phospho-beta-galactosidase of Streptococcus pyogenes serotype M1.